The sequence spans 435 residues: Adenylosuccinate synthetase (435 aa).

GTP is bound by residues 17-23 (GDEGKGK) and 47-49 (GHT). Residue Asp-18 is the Proton acceptor of the active site. Asp-18 and Gly-47 together coordinate Mg(2+). Residues 18-21 (DEGK), 45-48 (NAGH), Thr-138, Arg-152, Asn-232, Thr-247, and Arg-311 each bind IMP. His-48 acts as the Proton donor in catalysis. 307-313 (VTTGRKR) serves as a coordination point for substrate. GTP-binding positions include Arg-313, 339–341 (KLD), and 421–423 (GVG).

Belongs to the adenylosuccinate synthetase family. In terms of assembly, homodimer. The cofactor is Mg(2+).

The protein resides in the cytoplasm. It catalyses the reaction IMP + L-aspartate + GTP = N(6)-(1,2-dicarboxyethyl)-AMP + GDP + phosphate + 2 H(+). It participates in purine metabolism; AMP biosynthesis via de novo pathway; AMP from IMP: step 1/2. Plays an important role in the de novo pathway and in the salvage pathway of purine nucleotide biosynthesis. Catalyzes the first committed step in the biosynthesis of AMP from IMP. The polypeptide is Adenylosuccinate synthetase (Caenorhabditis briggsae).